The chain runs to 663 residues: MDFIFHYQSSWLIPMLPFLSAFVAGFGLISFRLPTRSLRHLYGLISTITVFFSMIISMNLLWKYIIGHSNYCFLFPWIVNDNISLKLGFFIDPLSSLMLFLVTSVAVLVMSYSHGYMSHDQSYVRFFAYLSLFTASMLGLVLSPNLFQIYIFWELVGMCSYLLIGFWFTRPNAASACQKAFITNRIGDFCLLLGILGLYWFTNSFDFITVTKRTEEIISNNNSHLYFFIFCSFLLFCGPIAKSAQFPLHIWLPDAMEGPTPISALIHAATMVAAGIFLVARLFPLFQLFPSIMNLITCIGILTAFLGSTIALSQIDLKKSLAYSTISQLGYMMVAMGIGSYKAGLFHLVTHAYSKALLFLGSGSVIHNLEPLLGYNPENNQNLVFMGGLGKSMPITRFTFLIGTLSLCGVPPFACFWSKDEIIADAWKYNFNLGLIAWITAGLTGFYMFRVYLLAFEGDFRGIIFLNKNNLKSTKEVHESNLYMLIPLIILSFLSLFIGFISTPFHDYLYIFLDSPIVYDNETSYFQILLNFSSIGVALIGMIIAYSIYAYNNISIDFGFFKRSLKKIYFEFYQFSFSKWYIEVFYHSLFLSGTRNLAQLLFYLDQWLFDGVVNLTGISTLLGGQSLKYKESGRVSSYLFSILIGALVLFFFLPLHNSQIGSN.

The next 16 helical transmembrane spans lie at 11-31 (WLIP…LISF), 41-61 (LYGL…MNLL), 89-109 (FFID…AVLV), 126-146 (FFAY…SPNL), 149-169 (IYIF…FWFT), 189-209 (FCLL…DFIT), 224-244 (HLYF…AKSA), 260-280 (TPIS…FLVA), 292-312 (IMNL…TIAL), 329-349 (LGYM…FHLV), 398-418 (FTFL…CFWS), 436-456 (IAWI…LLAF), 482-502 (LYML…GFIS), 528-548 (ILLN…AYSI), 607-627 (WLFD…GQSL), and 635-655 (VSSY…FLPL).

The protein belongs to the complex I subunit 5 family. In terms of assembly, NDH is composed of at least 16 different subunits, 5 of which are encoded in the nucleus.

It localises to the plastid. The protein localises to the chloroplast thylakoid membrane. It catalyses the reaction a plastoquinone + NADH + (n+1) H(+)(in) = a plastoquinol + NAD(+) + n H(+)(out). The enzyme catalyses a plastoquinone + NADPH + (n+1) H(+)(in) = a plastoquinol + NADP(+) + n H(+)(out). NDH shuttles electrons from NAD(P)H:plastoquinone, via FMN and iron-sulfur (Fe-S) centers, to quinones in the photosynthetic chain and possibly in a chloroplast respiratory chain. The immediate electron acceptor for the enzyme in this species is believed to be plastoquinone. Couples the redox reaction to proton translocation, and thus conserves the redox energy in a proton gradient. The protein is NAD(P)H-quinone oxidoreductase subunit 5, chloroplastic (ndhF) of Chara vulgaris (Common stonewort).